Reading from the N-terminus, the 60-residue chain is Large ribosomal subunit protein uL30 (60 aa).

It belongs to the universal ribosomal protein uL30 family. As to quaternary structure, part of the 50S ribosomal subunit.

In Acidovorax ebreus (strain TPSY) (Diaphorobacter sp. (strain TPSY)), this protein is Large ribosomal subunit protein uL30.